The primary structure comprises 204 residues: MNVTSISFPYGESIHWFSPQKIDSLPHSQLKEWLLATGSLTQRLKTHCKHFEVKVLGEHLLEPLADEFPAQTNPVWIREVLLCLDGTPWVFARTLIPQTILGSQTPNYQNADDKQIREQQNDFTRLGTRPLGELLFSSPDITPGNIEVAQFETCGRLAALATSLNQQVNSSLWGRRRYFNLHGSQLIVSEIFLPAAVEYINQSI.

The substrate site is built by arginine 78, leucine 131, and glutamate 190.

This sequence belongs to the UbiC family.

Its subcellular location is the cytoplasm. The catalysed reaction is chorismate = 4-hydroxybenzoate + pyruvate. It participates in cofactor biosynthesis; ubiquinone biosynthesis. In terms of biological role, removes the pyruvyl group from chorismate, with concomitant aromatization of the ring, to provide 4-hydroxybenzoate (4HB) for the ubiquinone pathway. The chain is Probable chorismate pyruvate-lyase from Shewanella frigidimarina (strain NCIMB 400).